The primary structure comprises 476 residues: Aspartyl/glutamyl-tRNA(Asn/Gln) amidotransferase subunit B (476 aa).

The protein belongs to the GatB/GatE family. GatB subfamily. In terms of assembly, heterotrimer of A, B and C subunits.

The enzyme catalyses L-glutamyl-tRNA(Gln) + L-glutamine + ATP + H2O = L-glutaminyl-tRNA(Gln) + L-glutamate + ADP + phosphate + H(+). It carries out the reaction L-aspartyl-tRNA(Asn) + L-glutamine + ATP + H2O = L-asparaginyl-tRNA(Asn) + L-glutamate + ADP + phosphate + 2 H(+). In terms of biological role, allows the formation of correctly charged Asn-tRNA(Asn) or Gln-tRNA(Gln) through the transamidation of misacylated Asp-tRNA(Asn) or Glu-tRNA(Gln) in organisms which lack either or both of asparaginyl-tRNA or glutaminyl-tRNA synthetases. The reaction takes place in the presence of glutamine and ATP through an activated phospho-Asp-tRNA(Asn) or phospho-Glu-tRNA(Gln). In Bacillus velezensis (strain DSM 23117 / BGSC 10A6 / LMG 26770 / FZB42) (Bacillus amyloliquefaciens subsp. plantarum), this protein is Aspartyl/glutamyl-tRNA(Asn/Gln) amidotransferase subunit B.